A 221-amino-acid chain; its full sequence is Ependymin-2 (221 aa).

A signal peptide spans 1-21 (MQDFAFAALSIWLCLGATALA). Residues N33, N73, and N97 are each glycosylated (N-linked (GlcNAc...) asparagine).

It belongs to the ependymin family. In terms of processing, binds calcium through the terminal sialic acids. In terms of tissue distribution, EPDs are synthesized in the meninx and secreted in the cerebrospinal fluid.

Its subcellular location is the secreted. In terms of biological role, may play a role in neural plasticity. May be involved during axon regeneration. This is Ependymin-2 (epd2) from Salmo salar (Atlantic salmon).